The primary structure comprises 353 residues: Heat-inducible transcription repressor HrcA (353 aa).

Belongs to the HrcA family.

Functionally, negative regulator of class I heat shock genes (grpE-dnaK-dnaJ and groELS operons). Prevents heat-shock induction of these operons. This chain is Heat-inducible transcription repressor HrcA, found in Anaeromyxobacter dehalogenans (strain 2CP-1 / ATCC BAA-258).